Reading from the N-terminus, the 180-residue chain is MFPMVTGFMNYGQQTVRAARYIGQSFMITLSHANRLPVTIQYPYEKLITSERFRGRIHFEFDKCIACEVCVRVCPIDLPVVDWKLETDIRKKRLLNYSIDFGICIFCGNCVEYCPTNCLSMTEEYELSTYDRHELNYNQIALGRLPMSVIGDYTIRTILNSTPIKKTAGNPLDSKTITNF.

2 4Fe-4S ferredoxin-type domains span residues 55-84 and 95-124; these read GRIH…VDWK and LNYS…MTEE. The [4Fe-4S] cluster site is built by Cys-64, Cys-67, Cys-70, Cys-74, Cys-104, Cys-107, Cys-110, and Cys-114.

The protein belongs to the complex I 23 kDa subunit family. In terms of assembly, NDH is composed of at least 16 different subunits, 5 of which are encoded in the nucleus. Requires [4Fe-4S] cluster as cofactor.

Its subcellular location is the plastid. The protein localises to the chloroplast thylakoid membrane. The catalysed reaction is a plastoquinone + NADH + (n+1) H(+)(in) = a plastoquinol + NAD(+) + n H(+)(out). The enzyme catalyses a plastoquinone + NADPH + (n+1) H(+)(in) = a plastoquinol + NADP(+) + n H(+)(out). NDH shuttles electrons from NAD(P)H:plastoquinone, via FMN and iron-sulfur (Fe-S) centers, to quinones in the photosynthetic chain and possibly in a chloroplast respiratory chain. The immediate electron acceptor for the enzyme in this species is believed to be plastoquinone. Couples the redox reaction to proton translocation, and thus conserves the redox energy in a proton gradient. The sequence is that of NAD(P)H-quinone oxidoreductase subunit I, chloroplastic from Nandina domestica (Heavenly bamboo).